The chain runs to 470 residues: Pheromone a factor receptor (470 aa).

Over methionine 1–serine 5 the chain is Extracellular. The chain crosses the membrane as a helical span at residues alanine 6–alanine 23. The Cytoplasmic portion of the chain corresponds to tryptophan 24–lysine 29. The chain crosses the membrane as a helical span at residues asparagine 30–isoleucine 53. Over tryptophan 54–aspartate 70 the chain is Extracellular. Residues isoleucine 71–leucine 98 form a helical membrane-spanning segment. Topologically, residues lysine 99 to aspartate 116 are cytoplasmic. A helical membrane pass occupies residues leucine 117–leucine 134. Over glutamine 135–tryptophan 155 the chain is Extracellular. A helical transmembrane segment spans residues isoleucine 156–phenylalanine 183. Over tyrosine 184–arginine 205 the chain is Cytoplasmic. The chain crosses the membrane as a helical span at residues phenylalanine 206–phenylalanine 228. At valine 229 to tryptophan 266 the chain is on the extracellular side. The chain crosses the membrane as a helical span at residues leucine 267–alanine 285. The Cytoplasmic segment spans residues leucine 286 to proline 470. Positions phenylalanine 300–proline 470 are hydrophilic. The disordered stretch occupies residues asparagine 440–proline 470.

The protein belongs to the G-protein coupled receptor 4 family.

Its subcellular location is the membrane. Receptor for the peptide pheromone a factor. The chain is Pheromone a factor receptor (STE3) from Saccharomyces cerevisiae (strain ATCC 204508 / S288c) (Baker's yeast).